We begin with the raw amino-acid sequence, 354 residues long: Anthranilate phosphoribosyltransferase (354 aa).

Belongs to the anthranilate phosphoribosyltransferase family.

It catalyses the reaction N-(5-phospho-beta-D-ribosyl)anthranilate + diphosphate = 5-phospho-alpha-D-ribose 1-diphosphate + anthranilate. It functions in the pathway amino-acid biosynthesis; L-tryptophan biosynthesis; L-tryptophan from chorismate: step 2/5. The sequence is that of Anthranilate phosphoribosyltransferase (trp4) from Schizosaccharomyces pombe (strain 972 / ATCC 24843) (Fission yeast).